The chain runs to 460 residues: Elongation factor 1-alpha (460 aa).

Glycine 2 is modified (n,N,N-trimethylglycine). Lysine 3 is subject to N6,N6-dimethyllysine; alternate. At lysine 3 the chain carries N6-methyllysine; alternate. One can recognise a tr-type G domain in the interval 5–240 (KTHVNLVVIG…DAIEPPVRPS (236 aa)). The tract at residues 14-21 (GHVDAGKS) is G1. Position 14-21 (14-21 (GHVDAGKS)) interacts with GTP. Lysine 30 is modified (N6-methyllysine). Residues 70–74 (GITID) are G2. N6,N6,N6-trimethyllysine is present on lysine 79. The interval 91-94 (DAPG) is G3. GTP is bound by residues 91-95 (DAPGH) and 153-156 (NKMD). Residues 153 to 156 (NKMD) form a G4 region. Residues 192–194 (SGW) are G5. An N6,N6-dimethyllysine; alternate modification is found at lysine 317. An N6-methyllysine; alternate modification is found at lysine 317. Lysine 391 bears the N6-methyllysine mark.

This sequence belongs to the TRAFAC class translation factor GTPase superfamily. Classic translation factor GTPase family. EF-Tu/EF-1A subfamily.

It is found in the cytoplasm. This protein promotes the GTP-dependent binding of aminoacyl-tRNA to the A-site of ribosomes during protein biosynthesis. The polypeptide is Elongation factor 1-alpha (TEF) (Yarrowia lipolytica (strain CLIB 122 / E 150) (Yeast)).